Reading from the N-terminus, the 182-residue chain is ATP synthase subunit delta (182 aa).

It belongs to the ATPase delta chain family. In terms of assembly, F-type ATPases have 2 components, F(1) - the catalytic core - and F(0) - the membrane proton channel. F(1) has five subunits: alpha(3), beta(3), gamma(1), delta(1), epsilon(1). CF(0) has four main subunits: a(1), b(1), b'(1) and c(10-14). The alpha and beta chains form an alternating ring which encloses part of the gamma chain. F(1) is attached to F(0) by a central stalk formed by the gamma and epsilon chains, while a peripheral stalk is formed by the delta, b and b' chains.

The protein resides in the cellular thylakoid membrane. In terms of biological role, f(1)F(0) ATP synthase produces ATP from ADP in the presence of a proton or sodium gradient. F-type ATPases consist of two structural domains, F(1) containing the extramembraneous catalytic core and F(0) containing the membrane proton channel, linked together by a central stalk and a peripheral stalk. During catalysis, ATP synthesis in the catalytic domain of F(1) is coupled via a rotary mechanism of the central stalk subunits to proton translocation. Its function is as follows. This protein is part of the stalk that links CF(0) to CF(1). It either transmits conformational changes from CF(0) to CF(1) or is implicated in proton conduction. The sequence is that of ATP synthase subunit delta from Synechococcus sp. (strain CC9902).